The sequence spans 404 residues: Putative arginine deiminase (404 aa).

The Amidino-cysteine intermediate role is filled by Cys394.

It belongs to the arginine deiminase family.

It is found in the cytoplasm. It carries out the reaction L-arginine + H2O = L-citrulline + NH4(+). Its pathway is amino-acid degradation; L-arginine degradation via ADI pathway; carbamoyl phosphate from L-arginine: step 1/2. This Mycoplasma pneumoniae (strain ATCC 29342 / M129 / Subtype 1) (Mycoplasmoides pneumoniae) protein is Putative arginine deiminase (arcA).